We begin with the raw amino-acid sequence, 307 residues long: tRNA pseudouridine synthase B (307 aa).

Aspartate 41 (nucleophile) is an active-site residue.

It belongs to the pseudouridine synthase TruB family. Type 1 subfamily.

It carries out the reaction uridine(55) in tRNA = pseudouridine(55) in tRNA. Functionally, responsible for synthesis of pseudouridine from uracil-55 in the psi GC loop of transfer RNAs. The sequence is that of tRNA pseudouridine synthase B from Prochlorococcus marinus (strain MIT 9312).